Here is a 340-residue protein sequence, read N- to C-terminus: Alcohol dehydrogenase (340 aa).

Residues C37, H58, C89, C92, C95, C103, and C145 each contribute to the Zn(2+) site.

Belongs to the zinc-containing alcohol dehydrogenase family. Requires Zn(2+) as cofactor.

The catalysed reaction is a primary alcohol + NAD(+) = an aldehyde + NADH + H(+). It catalyses the reaction a secondary alcohol + NAD(+) = a ketone + NADH + H(+). This is Alcohol dehydrogenase (adh) from Staphylococcus epidermidis (strain ATCC 12228 / FDA PCI 1200).